A 61-amino-acid polypeptide reads, in one-letter code: MAQKQIKVTLVRSVIGTKQSHRDTVRGLGLRRINSSRVLVDTPEVRGMIRKVDYLVSVSEA.

The protein belongs to the universal ribosomal protein uL30 family. In terms of assembly, part of the 50S ribosomal subunit.

This Bordetella petrii (strain ATCC BAA-461 / DSM 12804 / CCUG 43448) protein is Large ribosomal subunit protein uL30.